The following is a 337-amino-acid chain: o-succinylbenzoate synthase (337 aa).

The active-site Proton donor is the Lys142. The Mg(2+) site is built by Asp170, Glu199, and Asp222. Catalysis depends on Lys248, which acts as the Proton acceptor.

Belongs to the mandelate racemase/muconate lactonizing enzyme family. MenC type 1 subfamily. A divalent metal cation serves as cofactor.

It catalyses the reaction (1R,6R)-6-hydroxy-2-succinyl-cyclohexa-2,4-diene-1-carboxylate = 2-succinylbenzoate + H2O. Its pathway is quinol/quinone metabolism; 1,4-dihydroxy-2-naphthoate biosynthesis; 1,4-dihydroxy-2-naphthoate from chorismate: step 4/7. The protein operates within quinol/quinone metabolism; menaquinone biosynthesis. Converts 2-succinyl-6-hydroxy-2,4-cyclohexadiene-1-carboxylate (SHCHC) to 2-succinylbenzoate (OSB). The chain is o-succinylbenzoate synthase from Pasteurella multocida (strain Pm70).